The following is a 325-amino-acid chain: Pyruvate dehydrogenase E1 component subunit beta (325 aa).

Glutamate 60 contacts thiamine diphosphate.

Heterodimer of an alpha and a beta chain. The cofactor is thiamine diphosphate.

It localises to the cytoplasm. Its subcellular location is the secreted. It carries out the reaction N(6)-[(R)-lipoyl]-L-lysyl-[protein] + pyruvate + H(+) = N(6)-[(R)-S(8)-acetyldihydrolipoyl]-L-lysyl-[protein] + CO2. Its activity is regulated as follows. Activity of the E1 module is inhibited by the pyruvate dehydrogenase inhibitor PdhI. Functionally, the pyruvate dehydrogenase complex catalyzes the overall conversion of pyruvate to acetyl-CoA and CO(2). It contains multiple copies of three enzymatic components: pyruvate dehydrogenase (E1), dihydrolipoamide acetyltransferase (E2) and lipoamide dehydrogenase (E3). The B.subtilis PDH complex also possesses branched-chain 2-oxoacid dehydrogenase (BCDH) activity. In Bacillus subtilis (strain 168), this protein is Pyruvate dehydrogenase E1 component subunit beta.